A 572-amino-acid chain; its full sequence is Phosphoenolpyruvate-protein phosphotransferase (572 aa).

The active-site Tele-phosphohistidine intermediate is H190. 2 residues coordinate phosphoenolpyruvate: R297 and R333. Positions 427 and 451 each coordinate Mg(2+). Phosphoenolpyruvate contacts are provided by residues 450-451 (ND) and R461. The active-site Proton donor is the C498.

It belongs to the PEP-utilizing enzyme family. As to quaternary structure, homodimer. Mg(2+) is required as a cofactor.

The protein localises to the cytoplasm. The enzyme catalyses L-histidyl-[protein] + phosphoenolpyruvate = N(pros)-phospho-L-histidyl-[protein] + pyruvate. Functionally, general (non sugar-specific) component of the phosphoenolpyruvate-dependent sugar phosphotransferase system (sugar PTS). This major carbohydrate active-transport system catalyzes the phosphorylation of incoming sugar substrates concomitantly with their translocation across the cell membrane. Enzyme I transfers the phosphoryl group from phosphoenolpyruvate (PEP) to the phosphoryl carrier protein (HPr). In Mycoplasma genitalium (strain ATCC 33530 / DSM 19775 / NCTC 10195 / G37) (Mycoplasmoides genitalium), this protein is Phosphoenolpyruvate-protein phosphotransferase (ptsI).